Reading from the N-terminus, the 142-residue chain is Large ribosomal subunit protein uL11 (142 aa).

It belongs to the universal ribosomal protein uL11 family. In terms of assembly, part of the ribosomal stalk of the 50S ribosomal subunit. Interacts with L10 and the large rRNA to form the base of the stalk. L10 forms an elongated spine to which L12 dimers bind in a sequential fashion forming a multimeric L10(L12)X complex. Post-translationally, one or more lysine residues are methylated.

Functionally, forms part of the ribosomal stalk which helps the ribosome interact with GTP-bound translation factors. This chain is Large ribosomal subunit protein uL11, found in Alcanivorax borkumensis (strain ATCC 700651 / DSM 11573 / NCIMB 13689 / SK2).